A 68-amino-acid polypeptide reads, in one-letter code: uncharacterized protein (68 aa).

This is an uncharacterized protein from Dryophytes versicolor (chameleon treefrog).